Consider the following 872-residue polypeptide: MNKWTGLSAAAVLESRAQHGANLIPTKKLTPFWLLFLEQFKSLVVILLLVATILSLVVAIISGVNANWLFDHNLVIEWTQPFVILITVLANSLIGSIQEFKAQKSAHTLKSLTQPFTRVFREEGLVSLPVGEVVVGDIIFLEAGDIIPADGKVLQANHLRCMESFLTGESVPVDKSVVNTGGKGLLEQTNLLFSGAQVVFGSGVFEVTAVGLNTQVGQIVKTVDSSATKLSPLQQKLEKVGKWFSWFGLGLFVVVFLVQLGLLGFHNFSANWSIALIGAIALVVAIIPEGLVTFINVIFALSVQKLTKQKAIIKYLAAIETLGGVQIICTDKTGTLTQNKMKVVDYFCFSNTTQTDLARALCLCNNATVNTNGDSTGDPTEIALLQWLDRDGLELNHYTRVYEKAFDSNRKLMSVVVQKDNRFIVIVKGAHDVLLPLCKGLDSNQIKPLIDERASNGLRNLAVGLKVLYCFDPENTQTVNELESELDFLGSVSLQDPPRIESKAAIMACHQANITPIMITGDHLKTATAIAKELGILTDERQAILGVDLDPAKIMEYRVFARVTPQQKLEIVNAWKQAGYTVAVTGDGVNDAPALVTSDVGCCMGQTGVDIAKDAADVIISDDNFATIVNGIEQGRKTFLTCKRVLFNLFLTSIAGTIVVLLGLFVLGEVFREQLSKANHNFQVFTPTQLLIINLFVHGFPAVALAIQPVQEKLMLKPFSTKNLFYNRGGFDLIWQSLLLSFLTLLFYSLGMVYAINDPELGKSGDLINRAGATCGFMVLGGSAALNSLNLMVDRPLVATNPKHYGIVWLGALSSIFVFLLIIFINPLGLVFSTLKDLTAHPVLIGYSFGGVLLYMTINEVVKLIRLSYGSV.

Over 1 to 41 (MNKWTGLSAAAVLESRAQHGANLIPTKKLTPFWLLFLEQFK) the chain is Cytoplasmic. Residues 42–62 (SLVVILLLVATILSLVVAIIS) form a helical membrane-spanning segment. At 63–79 (GVNANWLFDHNLVIEWT) the chain is on the extracellular side. The helical transmembrane segment at 80 to 100 (QPFVILITVLANSLIGSIQEF) threads the bilayer. At 101 to 237 (KAQKSAHTLK…TKLSPLQQKL (137 aa)) the chain is on the cytoplasmic side. Residues 238 to 257 (EKVGKWFSWFGLGLFVVVFL) traverse the membrane as a helical segment. Residues 258–275 (VQLGLLGFHNFSANWSIA) are Extracellular-facing. A helical transmembrane segment spans residues 276-293 (LIGAIALVVAIIPEGLVT). The Cytoplasmic portion of the chain corresponds to 294–642 (FINVIFALSV…EQGRKTFLTC (349 aa)). The 4-aspartylphosphate intermediate role is filled by D331. 2 residues coordinate Mg(2+): D587 and D591. Residues 643-662 (KRVLFNLFLTSIAGTIVVLL) form a helical membrane-spanning segment. Topologically, residues 663 to 685 (GLFVLGEVFREQLSKANHNFQVF) are extracellular. A helical membrane pass occupies residues 686-706 (TPTQLLIINLFVHGFPAVALA). The Cytoplasmic portion of the chain corresponds to 707–724 (IQPVQEKLMLKPFSTKNL). Residues 725–747 (FYNRGGFDLIWQSLLLSFLTLLF) traverse the membrane as a helical segment. Residues 748–768 (YSLGMVYAINDPELGKSGDLI) lie on the Extracellular side of the membrane. The chain crosses the membrane as a helical span at residues 769-788 (NRAGATCGFMVLGGSAALNS). Residues 789 to 801 (LNLMVDRPLVATN) lie on the Cytoplasmic side of the membrane. A helical transmembrane segment spans residues 802–824 (PKHYGIVWLGALSSIFVFLLIIF). The Extracellular segment spans residues 825 to 842 (INPLGLVFSTLKDLTAHP). A helical membrane pass occupies residues 843–863 (VLIGYSFGGVLLYMTINEVVK). The Cytoplasmic portion of the chain corresponds to 864 to 872 (LIRLSYGSV).

This sequence belongs to the cation transport ATPase (P-type) (TC 3.A.3) family. Type II subfamily.

It localises to the cell membrane. It catalyses the reaction ATP + H2O = ADP + phosphate + H(+). In terms of biological role, could mediate calcium influx. This is Probable cation-transporting P-type ATPase (pacL) from Mycoplasma pneumoniae (strain ATCC 29342 / M129 / Subtype 1) (Mycoplasmoides pneumoniae).